The primary structure comprises 286 residues: uncharacterized protein (286 aa).

Transmembrane regions (helical) follow at residues 201-221 (VIYSITGAFSFIFGLGVLCET) and 231-251 (AIILGFIILILILAIVNYLMM).

The protein localises to the cell membrane. This is an uncharacterized protein from Methanocaldococcus jannaschii (strain ATCC 43067 / DSM 2661 / JAL-1 / JCM 10045 / NBRC 100440) (Methanococcus jannaschii).